The following is a 372-amino-acid chain: Lysophosphatidic acid receptor 5 (372 aa).

Over 1–26 the chain is Extracellular; that stretch reads MLANSSSTNSSVLPCPDYRPTHRLHL. Residues Asn4 and Asn9 are each glycosylated (N-linked (GlcNAc...) asparagine). The helical transmembrane segment at 27 to 47 threads the bilayer; the sequence is VVYSLVLAAGLPLNALALWVF. Residues 48-55 are Cytoplasmic-facing; that stretch reads LRALRVHS. A helical membrane pass occupies residues 56-76; sequence VVSVYMCNLAASDLLFTLSLP. The Extracellular segment spans residues 77-96; the sequence is VRLSYYALHHWPFPDLLCQT. Cys94 and Cys175 are joined by a disulfide. Residues 97 to 117 traverse the membrane as a helical segment; that stretch reads TGAIFQMNMYGSCIFLMLINV. The Cytoplasmic segment spans residues 118–136; the sequence is DRYAAIVHPLRLRHLRRPR. The chain crosses the membrane as a helical span at residues 137–157; it reads VARLLCLGVWALILVFAVPAA. At 158–187 the chain is on the extracellular side; sequence RVHRPSRCRYRDLEVRLCFESFSDELWKGR. The chain crosses the membrane as a helical span at residues 188–208; that stretch reads LLPLVLLAEALGFLLPLAAVV. At 209 to 239 the chain is on the cytoplasmic side; it reads YSSGRVFWTLARPDATQSQRRRKTVRLLLAN. Residues 240–260 traverse the membrane as a helical segment; that stretch reads LVIFLLCFVPYNSTLAVYGLL. Over 261-276 the chain is Extracellular; that stretch reads RSKLVAASVPARDRVR. The helical transmembrane segment at 277-297 threads the bilayer; that stretch reads GVLMVMVLLAGANCVLDPLVY. The Cytoplasmic segment spans residues 298–372; sequence YFSAEGFRNT…FTQCPQDSAL (75 aa). The disordered stretch occupies residues 312-372; sequence GTPHRARTSA…FTQCPQDSAL (61 aa). 2 stretches are compositionally biased toward polar residues: residues 332–341 and 357–372; these read SERSAVTTDA and SHSLSSFTQCPQDSAL.

The protein belongs to the G-protein coupled receptor 1 family. Not expressed in frontal cortex, basal forebrain, caudate putamen, thalamus, or hippocampus.

Its subcellular location is the cell membrane. Its function is as follows. Receptor for lysophosphatidic acid (LPA), a mediator of diverse cellular activities. The polypeptide is Lysophosphatidic acid receptor 5 (LPAR5) (Homo sapiens (Human)).